The primary structure comprises 274 residues: uncharacterized protein (274 aa).

This is an uncharacterized protein from Mycobacterium tuberculosis (strain ATCC 25618 / H37Rv).